We begin with the raw amino-acid sequence, 381 residues long: NF-kappa-B inhibitor-like protein 1 (381 aa).

A disordered region spans residues 1–34 (MSNPSPQAPEEEASTSVCRPQSCSMASASRRHRR). Over residues 14 to 27 (STSVCRPQSCSMAS) the composition is skewed to polar residues. 2 ANK repeats span residues 64 to 93 (AGQP…ADPA) and 97 to 134 (RHGD…IKNK). 2 disordered regions span residues 132–167 (KNKD…REWR) and 186–298 (EDDA…WRFG). Residue Ser-151 is modified to Phosphoserine. The span at 151–160 (SAEEEEDEEV) shows a compositional bias: acidic residues. Composition is skewed to basic and acidic residues over residues 205–218 (RLAR…RQQL) and 237–290 (RQHE…RGAE).

As to quaternary structure, interacts with CACTIN (via N-terminal domain); the interaction occurs in a pro-inflammatory-independent manner. High expression found in heart muscle, liver, kidney and skin. Not detected in spleen, lung and brain.

Its subcellular location is the nucleus. In terms of biological role, involved in the regulation of innate immune response. Acts as negative regulator of Toll-like receptor and interferon-regulatory factor (IRF) signaling pathways. Contributes to the negative regulation of transcriptional activation of NF-kappa-B target genes in response to endogenous pro-inflammatory stimuli. The polypeptide is NF-kappa-B inhibitor-like protein 1 (Nfkbil1) (Mus musculus (Mouse)).